Consider the following 591-residue polypeptide: Probable LRR receptor-like serine/threonine-protein kinase At1g69990 (591 aa).

The N-terminal stretch at 1–18 (MKTISIFFVIILMSSSHA) is a signal peptide. Residues 19-218 (EDDVLCLKGF…GKNLTIIVTA (200 aa)) are Extracellular-facing. A glycan (N-linked (GlcNAc...) asparagine) is linked at N46. LRR repeat units follow at residues 66-88 (RILS…LKLC), 90-111 (SLQS…QICS), 115-137 (YLVT…IVDC), 139-162 (FLNS…TRLN), and 163-185 (RLQR…LSHY). The N-linked (GlcNAc...) asparagine glycan is linked to N211. The chain crosses the membrane as a helical span at residues 219–239 (GVIGAVGSLCVGFGMFWWFFI). Over 240 to 591 (RDRRKMNNYG…LIFNKQEHLK (352 aa)) the chain is Cytoplasmic. The residue at position 292 (T292) is a Phosphothreonine. The 279-residue stretch at 295-573 (FDSGNIVVSS…KNLGDQHGFF (279 aa)) folds into the Protein kinase domain. Residues 301-309 (VVSSRSGVS) and K323 contribute to the ATP site. A Phosphoserine modification is found at S378. T389 carries the post-translational modification Phosphothreonine. Residue Y463 is modified to Phosphotyrosine. A Phosphoserine modification is found at S465. At T466 the chain carries Phosphothreonine. The residue at position 470 (S470) is a Phosphoserine.

It belongs to the protein kinase superfamily. Ser/Thr protein kinase family.

It is found in the membrane. The catalysed reaction is L-seryl-[protein] + ATP = O-phospho-L-seryl-[protein] + ADP + H(+). The enzyme catalyses L-threonyl-[protein] + ATP = O-phospho-L-threonyl-[protein] + ADP + H(+). This chain is Probable LRR receptor-like serine/threonine-protein kinase At1g69990, found in Arabidopsis thaliana (Mouse-ear cress).